Reading from the N-terminus, the 202-residue chain is Na(+)-translocating NADH-quinone reductase subunit E (202 aa).

Helical transmembrane passes span serine 11–isoleucine 31, valine 35–alanine 55, phenylalanine 81–leucine 101, glycine 114–valine 134, valine 144–isoleucine 164, and leucine 180–isoleucine 200.

This sequence belongs to the NqrDE/RnfAE family. In terms of assembly, composed of six subunits; NqrA, NqrB, NqrC, NqrD, NqrE and NqrF.

Its subcellular location is the cell inner membrane. The catalysed reaction is a ubiquinone + n Na(+)(in) + NADH + H(+) = a ubiquinol + n Na(+)(out) + NAD(+). Functionally, NQR complex catalyzes the reduction of ubiquinone-1 to ubiquinol by two successive reactions, coupled with the transport of Na(+) ions from the cytoplasm to the periplasm. NqrA to NqrE are probably involved in the second step, the conversion of ubisemiquinone to ubiquinol. In Azotobacter vinelandii (strain DJ / ATCC BAA-1303), this protein is Na(+)-translocating NADH-quinone reductase subunit E.